We begin with the raw amino-acid sequence, 231 residues long: ATP-dependent dethiobiotin synthetase BioD (231 aa).

12–17 (EVGKTV) lines the ATP pocket. T16 lines the Mg(2+) pocket. The active site involves K37. S41 is a substrate binding site. Residues D51, 112–115 (EGAG), and 202–204 (PKL) each bind ATP. The Mg(2+) site is built by D51 and E112.

Belongs to the dethiobiotin synthetase family. Homodimer. Mg(2+) serves as cofactor.

It is found in the cytoplasm. It catalyses the reaction (7R,8S)-7,8-diammoniononanoate + CO2 + ATP = (4R,5S)-dethiobiotin + ADP + phosphate + 3 H(+). It participates in cofactor biosynthesis; biotin biosynthesis; biotin from 7,8-diaminononanoate: step 1/2. Its function is as follows. Catalyzes a mechanistically unusual reaction, the ATP-dependent insertion of CO2 between the N7 and N8 nitrogen atoms of 7,8-diaminopelargonic acid (DAPA, also called 7,8-diammoniononanoate) to form a ureido ring. This is ATP-dependent dethiobiotin synthetase BioD from Bacillus subtilis subsp. natto.